The primary structure comprises 428 residues: Chaperone SurA (428 aa).

A signal peptide spans 1-13; it reads MLGALLLSGAVHA. PpiC domains lie at 164–265 and 276–375; these read SEEF…KLLE and RDEV…EVLG. Residues 211–230 are disordered; sequence TSSSSENALEGGDMGWRKAA.

The protein localises to the periplasm. The catalysed reaction is [protein]-peptidylproline (omega=180) = [protein]-peptidylproline (omega=0). Chaperone involved in the correct folding and assembly of outer membrane proteins. Recognizes specific patterns of aromatic residues and the orientation of their side chains, which are found more frequently in integral outer membrane proteins. May act in both early periplasmic and late outer membrane-associated steps of protein maturation. In Pseudomonas syringae pv. syringae (strain B728a), this protein is Chaperone SurA.